A 304-amino-acid polypeptide reads, in one-letter code: MALSPSVVPQESKEDNANCVETKPSQTTSIASEDPLQNLCLASQEVLRKAQQSGRSRCRQCGGSRMFYCYTCCVPVGNVPTEQIPCVQLPLKIDIIKHPNETDGKSTAVHAKLLAPDSVNIYTYPCIPEYEGKDHEVVLVFPGPQSISIEDVSFHLQKRIESKGRNKADNLDVPPRKLKRTTDEEGWDLHESTRQGPELKRVVFIDSTWSQTNQIASDERLRELLQVELRTRKTCFWRHQKGKPDTFLSTIEAIYYFLVDYHSAVQKEKYRGQYDNLLFFYSFMYRLIKNARGSGEKAKPQLVQ.

Disordered stretches follow at residues 1-29 (MALS…QTTS) and 165-193 (RNKA…HEST). Over residues 180-193 (RTTDEEGWDLHEST) the composition is skewed to basic and acidic residues. The DXTW signature appears at 206-209 (DSTW).

This sequence belongs to the TDD superfamily. DTWD1 family.

Its subcellular location is the nucleus. The enzyme catalyses a uridine in tRNA + S-adenosyl-L-methionine = a 3-[(3S)-3-amino-3-carboxypropyl]uridine in tRNA + S-methyl-5'-thioadenosine + H(+). In terms of biological role, catalyzes the formation of 3-(3-amino-3-carboxypropyl)uridine (acp3U) at position 20 in the D-loop of several cytoplasmic tRNAs (acp3U(20)). This chain is tRNA-uridine aminocarboxypropyltransferase 1, found in Mus musculus (Mouse).